Consider the following 468-residue polypeptide: Keratin, type I cytoskeletal 26 (468 aa).

The segment at 1-82 is head; the sequence is MSFRLSGGSR…GNEHSLLSGN (82 aa). Residues 83 to 118 form a coil 1A region; it reads EKVTMQNLNDRLASYLDHVHALEEANADLEQKIKGW. Residues 83–398 form the IF rod domain; the sequence is EKVTMQNLND…NLLDGEERKS (316 aa). The tract at residues 119–140 is linker 1; it reads YEKCEPGSSREHDHDYSRYFSV. The interval 141–232 is coil 1B; it reads IEDLKRQIIS…KSHEEEMEVL (92 aa). The segment at 233–255 is linker 12; it reads QYTAGGNVNVEMNATPGVDLTVL. The tract at residues 256–394 is coil 2; sequence LNNMRAEYED…DIYCNLLDGE (139 aa). Positions 395 to 465 are tail; it reads ERKSKSTCYK…NITVEQRVPS (71 aa).

The protein belongs to the intermediate filament family. In terms of assembly, heterotetramer of two type I and two type II keratins. Strongly expressed in skin and scalp, and weak expression observed in thymus and tongue. In the hair follicle, expression is restricted to the mid- to upper inner root sheath cuticle, being present slightly above the apex of the dermal papilla (at protein level).

The protein is Keratin, type I cytoskeletal 26 of Homo sapiens (Human).